The primary structure comprises 191 residues: Small ribosomal subunit protein eS7z (191 aa).

Residue M1 is modified to N-acetylmethionine. Residues 15 to 50 (ELSELDEQVAQAFFDLENTNQELKSELKDLYVNSAV) adopt a coiled-coil conformation.

It belongs to the eukaryotic ribosomal protein eS7 family.

This Arabidopsis thaliana (Mouse-ear cress) protein is Small ribosomal subunit protein eS7z (RPS7A).